Reading from the N-terminus, the 86-residue chain is Small ribosomal subunit protein uS17 (86 aa).

This sequence belongs to the universal ribosomal protein uS17 family. As to quaternary structure, part of the 30S ribosomal subunit.

In terms of biological role, one of the primary rRNA binding proteins, it binds specifically to the 5'-end of 16S ribosomal RNA. In Roseiflexus castenholzii (strain DSM 13941 / HLO8), this protein is Small ribosomal subunit protein uS17.